Here is a 398-residue protein sequence, read N- to C-terminus: Elongation factor Tu (398 aa).

The 198-residue stretch at 10–207 (KPHVNIGTIG…TVDEYIPEPE (198 aa)) folds into the tr-type G domain. The interval 19 to 26 (GHVDHGKT) is G1. 19–26 (GHVDHGKT) is a GTP binding site. T26 is a binding site for Mg(2+). The tract at residues 63-67 (GITIN) is G2. A G3 region spans residues 84–87 (DAPG). GTP is bound by residues 84 to 88 (DAPGH) and 139 to 142 (NKVD). The G4 stretch occupies residues 139 to 142 (NKVD). Residues 177 to 179 (SAL) form a G5 region.

Belongs to the TRAFAC class translation factor GTPase superfamily. Classic translation factor GTPase family. EF-Tu/EF-1A subfamily. In terms of assembly, monomer.

It is found in the cytoplasm. It catalyses the reaction GTP + H2O = GDP + phosphate + H(+). Functionally, GTP hydrolase that promotes the GTP-dependent binding of aminoacyl-tRNA to the A-site of ribosomes during protein biosynthesis. This Streptococcus pyogenes serotype M49 (strain NZ131) protein is Elongation factor Tu.